The sequence spans 502 residues: ATP synthase subunit alpha (502 aa).

Residues 115 to 137 are disordered; the sequence is VDGLGPVETTETRPIESPAPGVM. 169-176 is an ATP binding site; that stretch reads GDRQTGKT.

Belongs to the ATPase alpha/beta chains family. In terms of assembly, F-type ATPases have 2 components, CF(1) - the catalytic core - and CF(0) - the membrane proton channel. CF(1) has five subunits: alpha(3), beta(3), gamma(1), delta(1), epsilon(1). CF(0) has three main subunits: a(1), b(2) and c(9-12). The alpha and beta chains form an alternating ring which encloses part of the gamma chain. CF(1) is attached to CF(0) by a central stalk formed by the gamma and epsilon chains, while a peripheral stalk is formed by the delta and b chains.

It localises to the cell membrane. It catalyses the reaction ATP + H2O + 4 H(+)(in) = ADP + phosphate + 5 H(+)(out). Produces ATP from ADP in the presence of a proton gradient across the membrane. The alpha chain is a regulatory subunit. This Geobacillus kaustophilus (strain HTA426) protein is ATP synthase subunit alpha.